Consider the following 286-residue polypeptide: Polyamine aminopropyltransferase (286 aa).

A PABS domain is found at 5–238 (PLWHETLHDH…GIMTFAWASD (234 aa)). Position 33 (Gln-33) interacts with S-methyl-5'-thioadenosine. Residues His-64 and Asp-88 each contribute to the spermidine site. S-methyl-5'-thioadenosine contacts are provided by residues Glu-108 and 140-141 (DG). Residue Asp-158 is the Proton acceptor of the active site. 158 to 161 (DCTD) provides a ligand contact to spermidine. S-methyl-5'-thioadenosine is bound at residue Pro-165.

Belongs to the spermidine/spermine synthase family. In terms of assembly, homodimer or homotetramer.

It localises to the cytoplasm. The enzyme catalyses S-adenosyl 3-(methylsulfanyl)propylamine + putrescine = S-methyl-5'-thioadenosine + spermidine + H(+). The protein operates within amine and polyamine biosynthesis; spermidine biosynthesis; spermidine from putrescine: step 1/1. Catalyzes the irreversible transfer of a propylamine group from the amino donor S-adenosylmethioninamine (decarboxy-AdoMet) to putrescine (1,4-diaminobutane) to yield spermidine. This chain is Polyamine aminopropyltransferase, found in Klebsiella pneumoniae (strain 342).